A 183-amino-acid chain; its full sequence is Peptidyl-tRNA hydrolase (183 aa).

Position 14 (tyrosine 14) interacts with tRNA. Histidine 19 acts as the Proton acceptor in catalysis. Positions 60 and 62 each coordinate tRNA.

It belongs to the PTH family. In terms of assembly, monomer.

It localises to the cytoplasm. The catalysed reaction is an N-acyl-L-alpha-aminoacyl-tRNA + H2O = an N-acyl-L-amino acid + a tRNA + H(+). Functionally, hydrolyzes ribosome-free peptidyl-tRNAs (with 1 or more amino acids incorporated), which drop off the ribosome during protein synthesis, or as a result of ribosome stalling. Catalyzes the release of premature peptidyl moieties from peptidyl-tRNA molecules trapped in stalled 50S ribosomal subunits, and thus maintains levels of free tRNAs and 50S ribosomes. This is Peptidyl-tRNA hydrolase from Mycoplasmoides gallisepticum (strain R(low / passage 15 / clone 2)) (Mycoplasma gallisepticum).